A 215-amino-acid polypeptide reads, in one-letter code: Osteoclast-stimulating factor 1 (215 aa).

Ser2 carries the N-acetylserine modification. An SH3 domain is found at 12 to 71 (GQVKVFRALYTFEPRTPDELYFEEGDIIYITDMSDTSWWKGTCKGRTGLIPSNYVAEQAE). ANK repeat units lie at residues 72–101 (SIDN…GVNG), 105–135 (AGST…ELNQ), and 139–168 (LGDT…RTDL). A disordered region spans residues 192 to 215 (KQQGTDGARTLSNAEDYLDDEDSD). Thr201 carries the phosphothreonine modification. A phosphoserine mark is found at Ser203 and Ser214.

As to quaternary structure, interacts with C-SRC and SMN1. Interacts with FASLG.

Its subcellular location is the cytoplasm. Functionally, induces bone resorption, acting probably through a signaling cascade which results in the secretion of factor(s) enhancing osteoclast formation and activity. The chain is Osteoclast-stimulating factor 1 (Ostf1) from Mus musculus (Mouse).